The sequence spans 235 residues: Small ribosomal subunit protein eS4 (235 aa).

The S4 RNA-binding domain occupies Leu-37 to Asn-110.

The protein belongs to the eukaryotic ribosomal protein eS4 family.

The sequence is that of Small ribosomal subunit protein eS4 from Methanosarcina mazei (strain ATCC BAA-159 / DSM 3647 / Goe1 / Go1 / JCM 11833 / OCM 88) (Methanosarcina frisia).